A 359-amino-acid polypeptide reads, in one-letter code: Insulin gene enhancer protein ISL-2 (359 aa).

2 LIM zinc-binding domains span residues 25 to 86 (AMCV…RLFG) and 87 to 149 (IKCA…LLER). The disordered stretch occupies residues 151–190 (AAGSPRSPGPLPGARGLHLPDAGSGRQPSLRTHVHKQAEK). Phosphoserine is present on residues Ser154 and Ser157. Residues 191 to 250 (TTRVRTVLNEKQLHTLRTCYAANPRPDALMKEQLVEMTGLSPRVIRVWFQNKRCKDKKKS) constitute a DNA-binding region (homeobox). Residues 272–301 (GTPLVAGSPIRHENAVQGSAVEVQTYQPPW) are LIM-binding domain (LID). A Phosphoserine modification is found at Ser279. The segment covering 326–336 (ESGSLGNSSGS) has biased composition (low complexity). A disordered region spans residues 326 to 359 (ESGSLGNSSGSDVTSLSSQLPDTPNSMVPSPVET). Residues 337–359 (DVTSLSSQLPDTPNSMVPSPVET) are compositionally biased toward polar residues.

In terms of assembly, interacts with LHX4.

Its subcellular location is the nucleus. In terms of biological role, transcriptional factor that defines subclasses of motoneurons that segregate into columns in the spinal cord and select distinct axon pathways. In Mus musculus (Mouse), this protein is Insulin gene enhancer protein ISL-2 (Isl2).